The following is a 1218-amino-acid chain: MAEPRMPRPATSPTRDKSHSPYRESPSRRLRDVETGYNPPQNPPYPPQRNGTEPYPPSPSSRTADWEPIMSNPNPMSQSDLGRKKSLIRPERNRIDRDHPNYYYRKHAANMEVLPSTTGNDPVVEDLAEHRTVSSGSTQQDTSIEEEVVGNPQKSRMPGKLEPVGKKKAPRKLVRKDTRNLTEEEKRRQKELDKIKPPSIWNIYCAVVTFWAPDCLLQCFGMPARAQRRAWREKVGLISIILLIAAFVGFLTFGFTQAVCAAPGLRLKINHVDRGYMIFHGGAYNLDGSMHPAARGIPLDANVLYDLPHKYGGQDGSFMFQKVNGACKGLITLAEGSDVPTNSDGDLAWYFPCTAFNQDGSSEVNLTSPYYLGYACHTTAKARNTFYSLKKAGDVYFTWDDIKNKSRNLAVYSGSVVDLDLLKWFNKSQVAWPQQFDDLRENGRVRGMDLTHVLQSATDKQVGRCLTQIAKVGSIDTESVGCIASKVVLYVSLVFILAIVAAKFFLALAFQWFLARRFAAAKTSQTSDPKKRAKQIEDWTDDIYKPAPKITDPASTVTGSDGRTSKRGSMFLPQTSRFTSPYAVDRRSSRPPPTTMTSQSSNAKLLPGGNPYKSGFNSSQNTLDLHSRMSVGASRSSLLLSGQETRYSAVMDNLDPNGPVGFIHENVVPQPPPEWQPFGYPLAHVICLVTAYSEGEDGIRTTLDSIATTDYPNSHKAILVVCDGMIKGKGEAQSTPDIVLGMMGDFVIAPEDVQAFSYVAVSSGAKRHNMAKVYAGFYDYGPKSRIDPTKQQRVPMMVVVKCGTPDEATKSKPGNRGKRDSQIILMSFLQKVMFDERMTELEYEMFNGLWKVTGMSPDFYEMVLMVDADTKVFPDSLTHMVSAMVKDPEIMGLCGETKIANKNASWVSRIQVFEYFISHHLSKSFESVFGGVTCLPGCFCMYRIKSPKGGQNYWVPILANPDIVEHYSENVVDTLHKKNLLLLGEDRYLSTLMLKTFPKRKQVFVPQAVCKTTVPDEFKVLLSQRRRWINSTVHNLMELVLVRDLCGTFCFSMQFVVFIELIGTLVLPAAISFTFYLIIISIVKKPVPVIPLVLLALILGLPAILIVLTAHRWSYILWMGIYLLSLPIWNFVLPAYAFWKFDDFSWGETRKTAGEKTKKAGLEYEGEFDSSKITMKRWGDFERERRAQANGSVWNQQPPTRPPSGYGSMHGFEPYRDY.

2 disordered regions span residues 1-93 and 132-190; these read MAEP…PERN and TVSS…RRQK. Over residues 14-34 the composition is skewed to basic and acidic residues; the sequence is TRDKSHSPYRESPSRRLRDVE. The N-linked (GlcNAc...) asparagine glycan is linked to Asn50. Polar residues-rich tracts occupy residues 71 to 80 and 133 to 142; these read SNPNPMSQSD and VSSGSTQQDT. The span at 175–190 shows a compositional bias: basic and acidic residues; that stretch reads RKDTRNLTEEEKRRQK. N-linked (GlcNAc...) asparagine glycosylation occurs at Asn180. 2 consecutive transmembrane segments (helical) span residues 200–220 and 235–255; these read IWNI…LQCF and VGLI…TFGF. Residues Asn365, Asn404, and Asn426 are each glycosylated (N-linked (GlcNAc...) asparagine). The chain crosses the membrane as a helical span at residues 487 to 507; sequence VVLYVSLVFILAIVAAKFFLA. Disordered stretches follow at residues 548–570 and 582–606; these read PKIT…RGSM and YAVD…AKLL. A compositionally biased stretch (polar residues) spans 553-562; sequence PASTVTGSDG. 3 N-linked (GlcNAc...) asparagine glycosylation sites follow: Asn617, Asn903, and Asn1030. 3 consecutive transmembrane segments (helical) span residues 1062 to 1082, 1087 to 1107, and 1115 to 1135; these read IGTL…IISI, VPVI…ILIV, and YILW…VLPA. The segment at 1188–1218 is disordered; that stretch reads QANGSVWNQQPPTRPPSGYGSMHGFEPYRDY. Residues 1189–1198 are compositionally biased toward polar residues; sequence ANGSVWNQQP. Asn1190 is a glycosylation site (N-linked (GlcNAc...) asparagine).

Belongs to the chitin synthase family. Class IV subfamily. Post-translationally, maximal activity requires trypsin activation, suggesting a zymogenic nature.

It is found in the cell membrane. It carries out the reaction [(1-&gt;4)-N-acetyl-beta-D-glucosaminyl](n) + UDP-N-acetyl-alpha-D-glucosamine = [(1-&gt;4)-N-acetyl-beta-D-glucosaminyl](n+1) + UDP + H(+). Activity is stimulated by Mg(2+), and is more inhibited by polyoxin D than by nikkomycin. Polymerizes chitin, a structural polymer of the cell wall and septum, by transferring the sugar moiety of UDP-GlcNAc to the non-reducing end of the growing chitin polymer. CHS4 synthesizes a large amount of chitin and appears to play a role in the process of cell separation. CHS4 is particularly well suited for functioning at the higher temperatures associated with its poorly characterized saprophic environment and with human infection. This Exophiala dermatitidis (strain ATCC 34100 / CBS 525.76 / NIH/UT8656) (Black yeast) protein is Chitin synthase 4.